The chain runs to 318 residues: Pantothenate kinase (318 aa).

96–103 (GSVAVGKS) serves as a coordination point for ATP.

The protein belongs to the prokaryotic pantothenate kinase family.

The protein resides in the cytoplasm. It carries out the reaction (R)-pantothenate + ATP = (R)-4'-phosphopantothenate + ADP + H(+). It participates in cofactor biosynthesis; coenzyme A biosynthesis; CoA from (R)-pantothenate: step 1/5. The polypeptide is Pantothenate kinase (Coxiella burnetii (strain CbuK_Q154) (Coxiella burnetii (strain Q154))).